A 699-amino-acid chain; its full sequence is Endoplasmic reticulum mannosyl-oligosaccharide 1,2-alpha-mannosidase (699 aa).

The Cytoplasmic segment spans residues 1 to 84 (MAACEGRRSG…WKQLSRLQRN (84 aa)). The chain crosses the membrane as a helical; Signal-anchor for type II membrane protein span at residues 85 to 105 (MILFLLAFLLFCGLLFYINLA). Over 106-699 (DHWKALAFRL…AHPLPIWTPA (594 aa)) the chain is Lumenal. The tract at residues 125–243 (IAGLKPANPP…LPPARTQGTP (119 aa)) is disordered. The segment covering 176–201 (DLKDGTQEEATKRQEAPVDPRPEGDP) has biased composition (basic and acidic residues). Residue E330 is the Proton donor of the active site. D463 is an active-site residue. C527 and C556 are joined by a disulfide. E570 serves as the catalytic Proton donor. The active site involves E599. T688 is a Ca(2+) binding site.

This sequence belongs to the glycosyl hydrolase 47 family. It depends on Ca(2+) as a cofactor. In terms of tissue distribution, widely expressed.

It is found in the endoplasmic reticulum membrane. The catalysed reaction is N(4)-(alpha-D-Man-(1-&gt;2)-alpha-D-Man-(1-&gt;2)-alpha-D-Man-(1-&gt;3)-[alpha-D-Man-(1-&gt;2)-alpha-D-Man-(1-&gt;3)-[alpha-D-Man-(1-&gt;2)-alpha-D-Man-(1-&gt;6)]-alpha-D-Man-(1-&gt;6)]-beta-D-Man-(1-&gt;4)-beta-D-GlcNAc-(1-&gt;4)-beta-D-GlcNAc)-L-asparaginyl-[protein] (N-glucan mannose isomer 9A1,2,3B1,2,3) + 4 H2O = N(4)-(alpha-D-Man-(1-&gt;3)-[alpha-D-Man-(1-&gt;3)-[alpha-D-Man-(1-&gt;6)]-alpha-D-Man-(1-&gt;6)]-beta-D-Man-(1-&gt;4)-beta-D-GlcNAc-(1-&gt;4)-beta-D-GlcNAc)-L-asparaginyl-[protein] (N-glucan mannose isomer 5A1,2) + 4 beta-D-mannose. The enzyme catalyses N(4)-(alpha-D-Man-(1-&gt;2)-alpha-D-Man-(1-&gt;2)-alpha-D-Man-(1-&gt;3)-[alpha-D-Man-(1-&gt;3)-[alpha-D-Man-(1-&gt;2)-alpha-D-Man-(1-&gt;6)]-alpha-D-Man-(1-&gt;6)]-beta-D-Man-(1-&gt;4)-beta-D-GlcNAc-(1-&gt;4)-beta-D-GlcNAc)-L-asparaginyl-[protein] (N-glucan mannose isomer 8A1,2,3B1,3) + 3 H2O = N(4)-(alpha-D-Man-(1-&gt;3)-[alpha-D-Man-(1-&gt;3)-[alpha-D-Man-(1-&gt;6)]-alpha-D-Man-(1-&gt;6)]-beta-D-Man-(1-&gt;4)-beta-D-GlcNAc-(1-&gt;4)-beta-D-GlcNAc)-L-asparaginyl-[protein] (N-glucan mannose isomer 5A1,2) + 3 beta-D-mannose. It functions in the pathway protein modification; protein glycosylation. Its activity is regulated as follows. Inhibited by both 1-deoxymannojirimycin (dMNJ) and kifunensine. Its function is as follows. Involved in glycoprotein quality control targeting of misfolded glycoproteins for degradation. It primarily trims a single alpha-1,2-linked mannose residue from Man(9)GlcNAc(2) to produce Man(8)GlcNAc(2), but at high enzyme concentrations, as found in the ER quality control compartment (ERQC), it further trims the carbohydrates to Man(5-6)GlcNAc(2). The chain is Endoplasmic reticulum mannosyl-oligosaccharide 1,2-alpha-mannosidase (MAN1B1) from Homo sapiens (Human).